A 188-amino-acid chain; its full sequence is Elongation factor P (188 aa).

The protein belongs to the elongation factor P family.

Its subcellular location is the cytoplasm. It functions in the pathway protein biosynthesis; polypeptide chain elongation. In terms of biological role, involved in peptide bond synthesis. Stimulates efficient translation and peptide-bond synthesis on native or reconstituted 70S ribosomes in vitro. Probably functions indirectly by altering the affinity of the ribosome for aminoacyl-tRNA, thus increasing their reactivity as acceptors for peptidyl transferase. This is Elongation factor P from Chlorobaculum tepidum (strain ATCC 49652 / DSM 12025 / NBRC 103806 / TLS) (Chlorobium tepidum).